We begin with the raw amino-acid sequence, 437 residues long: MAAPVVAIVGRPNVGKSTIFNRMAGERIAIVEDKPGVTRDRLYAPAEWLNYEFRMIDTGGIELGDEPFLAEIRAQVELAIDEADVIVMVASGREGVTAADEVVAKMLYKTDKPVILAVNKVDNPEMRQDIYDFYSLGLGDLFPVSGSHGLGLGDLLDAVVKHFPDEAAEQEDDGAIRFSIIGRPNVGKSSIVNAMLGEDRVIVSDIEGTTRDAIDSRFVTAEGDEFIMVDTAGMRKRGKVYENTEKYSVMRALKAIDNSNVILMVLDAEAGIREQDKHVAGFAHDAGRAMIIIVNKWDAIEKDGHTMKEFENLIRSEFKFLDYAPIMFVSAKTGQRLDRIPQLVKDVDDNHRKRISSSTLNDVIMDAIAVNPTPTDNGRRLRVYYATQVAIQPPTFVIFVNDVELMHFSYERFLENKIREAFDFTGTPIKLIVRARK.

2 consecutive EngA-type G domains span residues proline 4–alanine 167 and isoleucine 176–arginine 352. Residues glycine 10–serine 17, aspartate 57–isoleucine 61, asparagine 119–aspartate 122, glycine 182–serine 189, aspartate 230–methionine 234, and asparagine 295–aspartate 298 contribute to the GTP site. The region spanning lysine 353–lysine 437 is the KH-like domain.

The protein belongs to the TRAFAC class TrmE-Era-EngA-EngB-Septin-like GTPase superfamily. EngA (Der) GTPase family. In terms of assembly, associates with the 50S ribosomal subunit.

In terms of biological role, GTPase that plays an essential role in the late steps of ribosome biogenesis. In Leuconostoc citreum (strain KM20), this protein is GTPase Der.